The following is a 340-amino-acid chain: Immunoglobulin-binding protein 1 (340 aa).

The UIM domain maps to 47–61 (LELLEKAAGMLSQLD). Residues 99 to 203 (RLDHLQRARE…YLLHLRRWIG (105 aa)) are interaction with PPP2CA. Disordered stretches follow at residues 221 to 242 (DKDS…PPMK) and 281 to 340 (LPDR…QNMG). An interaction with MID1 region spans residues 226 to 291 (REESACQSSL…PDRGIAKPPS (66 aa)). Position 242 is an N6-acetyllysine (K242). Residues 292 to 301 (ADFQRAAQQQ) show a composition bias toward low complexity. Residues 302 to 312 (EDQEQKDEENE) are compositionally biased toward acidic residues. The segment covering 313–330 (EKALHRMREWDDWKDTHP) has biased composition (basic and acidic residues).

It belongs to the IGBP1/TAP42 family. As to quaternary structure, interacts with partially folded PPP2CA, but not with the fully active protein. Interacts with PPP2CB, and with PP4 and PP6. Interacts with MID1 and MID2. Interacts with ubiquitin. In terms of processing, phosphorylated. Monoubiquitination by MID1 triggers calpain-mediated cleavage and switches IGBP1 activity from protective to destructive.

The protein resides in the cytoplasm. Associated to surface IgM-receptor; may be involved in signal transduction. Involved in regulation of the catalytic activity of the phosphatases PP2A, PP4 and PP6 by protecting their partially folded catalytic subunits from degradative polyubiquitination until they associate with regulatory subunits. The chain is Immunoglobulin-binding protein 1 (Igbp1) from Rattus norvegicus (Rat).